A 309-amino-acid polypeptide reads, in one-letter code: Olfactory receptor 1A1 (309 aa).

Topologically, residues 1-25 (MRENNQSSTLEFILLGVTGQQEQED) are extracellular. A glycan (N-linked (GlcNAc...) asparagine) is linked at Asn5. The helical transmembrane segment at 26–49 (FFYILFLFIYPITLIGNLLIVLAI) threads the bilayer. Residues 50-57 (CSDVHLHN) lie on the Cytoplasmic side of the membrane. A helical transmembrane segment spans residues 58-79 (PMYFLLANLSLVDIFFSSVTIP). At 80–100 (KMLANHLSGSKSISFGGCLTQ) the chain is on the extracellular side. An intrachain disulfide couples Cys97 to Cys189. The helical transmembrane segment at 101–120 (MYFMIDLGNTDSYTLAAMAY) threads the bilayer. Over 121 to 139 (DRAVAISRPLHYTTIMSPR) the chain is Cytoplasmic. Residues 140-158 (SCIWLIAGSWVIGNANALP) traverse the membrane as a helical segment. The Extracellular portion of the chain corresponds to 159-195 (HTLLTASLSFCGNQEVANFYCDITPLLKLSCSDIHFH). Residues 196–218 (VKMMYLGVGIFSVPLLCIIVSYI) form a helical membrane-spanning segment. Residues 219–235 (RVFSTVFQVPSTKGVLK) lie on the Cytoplasmic side of the membrane. Residues 236–258 (AFSTCGSHLTVVSLYYGTVMGMY) form a helical membrane-spanning segment. Over 259-270 (FRPLTNYSLKDA) the chain is Extracellular. Asn264 carries an N-linked (GlcNAc...) asparagine glycan. Residues 271-290 (VITVMCTAVTPMLNPFIYSL) traverse the membrane as a helical segment. Residues 291 to 309 (RNRDMKAALQKLFNKRISS) are Cytoplasmic-facing.

The protein belongs to the G-protein coupled receptor 1 family.

It localises to the cell membrane. Functionally, odorant receptor. This is Olfactory receptor 1A1 (OR1A1) from Gorilla gorilla gorilla (Western lowland gorilla).